A 706-amino-acid chain; its full sequence is Translation factor GUF1 homolog, mitochondrial (706 aa).

A tr-type G domain is found at 89–272 (SRIRNFSIIA…SIVKNVPPPQ (184 aa)). GTP-binding positions include 98-105 (AHIDHGKS), 165-169 (DTPGH), and 219-222 (NKID).

This sequence belongs to the TRAFAC class translation factor GTPase superfamily. Classic translation factor GTPase family. LepA subfamily.

It is found in the mitochondrion inner membrane. The catalysed reaction is GTP + H2O = GDP + phosphate + H(+). Its function is as follows. Promotes mitochondrial protein synthesis. May act as a fidelity factor of the translation reaction, by catalyzing a one-codon backward translocation of tRNAs on improperly translocated ribosomes. Binds to mitochondrial ribosomes in a GTP-dependent manner. This chain is Translation factor GUF1 homolog, mitochondrial, found in Thalassiosira pseudonana (Marine diatom).